We begin with the raw amino-acid sequence, 180 residues long: NADH-quinone oxidoreductase subunit I (180 aa).

2 4Fe-4S ferredoxin-type domains span residues 50 to 80 and 90 to 119; these read LTRN…LQKS and KFFR…LMPD. Positions 60, 63, 66, 70, 99, 102, 105, and 109 each coordinate [4Fe-4S] cluster.

This sequence belongs to the complex I 23 kDa subunit family. NDH-1 is composed of 13 different subunits. Subunits NuoA, H, J, K, L, M, N constitute the membrane sector of the complex. [4Fe-4S] cluster serves as cofactor.

It localises to the cell membrane. The enzyme catalyses a quinone + NADH + 5 H(+)(in) = a quinol + NAD(+) + 4 H(+)(out). In terms of biological role, NDH-1 shuttles electrons from NADH, via FMN and iron-sulfur (Fe-S) centers, to quinones in the respiratory chain. The immediate electron acceptor for the enzyme in this species is believed to be ubiquinone. Couples the redox reaction to proton translocation (for every two electrons transferred, four hydrogen ions are translocated across the cytoplasmic membrane), and thus conserves the redox energy in a proton gradient. In Buchnera aphidicola subsp. Schizaphis graminum (strain Sg), this protein is NADH-quinone oxidoreductase subunit I.